The primary structure comprises 404 residues: Flavohemoprotein (404 aa).

The region spanning 1-138 is the Globin domain; sequence MLSEQTRSLV…LADTLIGIEN (138 aa). Residue histidine 85 coordinates heme b. Catalysis depends on charge relay system residues tyrosine 95 and glutamate 137. The reductase stretch occupies residues 149-404; that stretch reads GGWSGWRPFR…EVFGSHPGDD (256 aa). An FAD-binding FR-type domain is found at 152–263; sequence SGWRPFRVAK…SAPQGDFFLH (112 aa). FAD is bound by residues tyrosine 190 and 206-209; that span reads RQYS. An NADP(+)-binding site is contributed by 276 to 281; sequence GVGQTP. 396-399 is a binding site for FAD; that stretch reads VFGS.

This sequence belongs to the globin family. Two-domain flavohemoproteins subfamily. In the C-terminal section; belongs to the flavoprotein pyridine nucleotide cytochrome reductase family. Requires heme b as cofactor. It depends on FAD as a cofactor.

The catalysed reaction is 2 nitric oxide + NADPH + 2 O2 = 2 nitrate + NADP(+) + H(+). The enzyme catalyses 2 nitric oxide + NADH + 2 O2 = 2 nitrate + NAD(+) + H(+). Functionally, is involved in NO detoxification in an aerobic process, termed nitric oxide dioxygenase (NOD) reaction that utilizes O(2) and NAD(P)H to convert NO to nitrate, which protects the bacterium from various noxious nitrogen compounds. Therefore, plays a central role in the inducible response to nitrosative stress. The chain is Flavohemoprotein from Chromobacterium violaceum (strain ATCC 12472 / DSM 30191 / JCM 1249 / CCUG 213 / NBRC 12614 / NCIMB 9131 / NCTC 9757 / MK).